Reading from the N-terminus, the 141-residue chain is NADH dehydrogenase [ubiquinone] 1 alpha subcomplex subunit 11 (141 aa).

Alanine 2 carries the N-acetylalanine modification. Transmembrane regions (helical) follow at residues 22-43 (TYAT…SVAL) and 58-80 (RYTF…SAQV).

Complex I is composed of 45 different subunits.

The protein resides in the mitochondrion inner membrane. Accessory subunit of the mitochondrial membrane respiratory chain NADH dehydrogenase (Complex I), that is believed not to be involved in catalysis. Complex I functions in the transfer of electrons from NADH to the respiratory chain. The immediate electron acceptor for the enzyme is believed to be ubiquinone. The polypeptide is NADH dehydrogenase [ubiquinone] 1 alpha subcomplex subunit 11 (NDUFA11) (Bos taurus (Bovine)).